The sequence spans 207 residues: dTTP/UTP pyrophosphatase (207 aa).

The active-site Proton acceptor is Asp-86.

Belongs to the Maf family. YhdE subfamily. A divalent metal cation is required as a cofactor.

Its subcellular location is the cytoplasm. It catalyses the reaction dTTP + H2O = dTMP + diphosphate + H(+). The enzyme catalyses UTP + H2O = UMP + diphosphate + H(+). Functionally, nucleoside triphosphate pyrophosphatase that hydrolyzes dTTP and UTP. May have a dual role in cell division arrest and in preventing the incorporation of modified nucleotides into cellular nucleic acids. The sequence is that of dTTP/UTP pyrophosphatase from Nitrosospira multiformis (strain ATCC 25196 / NCIMB 11849 / C 71).